A 102-amino-acid polypeptide reads, in one-letter code: Large ribosomal subunit protein uL23 (102 aa).

It belongs to the universal ribosomal protein uL23 family. Part of the 50S ribosomal subunit. Contacts protein L29, and trigger factor when it is bound to the ribosome.

Functionally, one of the early assembly proteins it binds 23S rRNA. One of the proteins that surrounds the polypeptide exit tunnel on the outside of the ribosome. Forms the main docking site for trigger factor binding to the ribosome. This is Large ribosomal subunit protein uL23 from Chromobacterium violaceum (strain ATCC 12472 / DSM 30191 / JCM 1249 / CCUG 213 / NBRC 12614 / NCIMB 9131 / NCTC 9757 / MK).